Here is a 141-residue protein sequence, read N- to C-terminus: Hemoglobin subunit alpha (141 aa).

One can recognise a Globin domain in the interval 1-141; sequence VLSPADKTNV…VSTVLTSKYR (141 aa). At serine 3 the chain carries Phosphoserine. At lysine 7 the chain carries N6-succinyllysine. Position 8 is a phosphothreonine (threonine 8). Lysine 11 is modified (N6-succinyllysine). The residue at position 16 (lysine 16) is an N6-acetyllysine; alternate. An N6-succinyllysine; alternate modification is found at lysine 16. Tyrosine 24 bears the Phosphotyrosine mark. Serine 35 is modified (phosphoserine). At lysine 40 the chain carries N6-succinyllysine. Serine 49 carries the phosphoserine modification. O2 is bound at residue histidine 58. Histidine 87 contacts heme b. Phosphoserine is present on serine 102. Threonine 108 carries the phosphothreonine modification. The residue at position 124 (serine 124) is a Phosphoserine. 2 positions are modified to phosphothreonine: threonine 134 and threonine 137. Serine 138 is modified (phosphoserine).

This sequence belongs to the globin family. As to quaternary structure, heterotetramer of two alpha chains and two beta chains. Red blood cells.

Involved in oxygen transport from the lung to the various peripheral tissues. Its function is as follows. Hemopressin acts as an antagonist peptide of the cannabinoid receptor CNR1. Hemopressin-binding efficiently blocks cannabinoid receptor CNR1 and subsequent signaling. This chain is Hemoglobin subunit alpha (HBA), found in Lutra lutra (European river otter).